We begin with the raw amino-acid sequence, 173 residues long: Photosystem I assembly protein Ycf3 (173 aa).

3 TPR repeats span residues 35-68, 72-105, and 120-153; these read AFSY…EIDP, SYIL…NPSL, and GEQA…APNS.

It belongs to the Ycf3 family.

The protein localises to the plastid. It is found in the chloroplast thylakoid membrane. Essential for the assembly of the photosystem I (PSI) complex. May act as a chaperone-like factor to guide the assembly of the PSI subunits. The polypeptide is Photosystem I assembly protein Ycf3 (Mesostigma viride (Green alga)).